Consider the following 452-residue polypeptide: Sensor histidine kinase HprS (452 aa).

The Cytoplasmic portion of the chain corresponds to 1–9 (MKRLSITVR). The helical transmembrane segment at 10–30 (LTLLFILLLSVAGAGIVWTLY) threads the bilayer. Over 31 to 158 (NGLASELKWR…ARHNMLEQYK (128 aa)) the chain is Periplasmic. Residues 159–179 (INSIIICIVAIVLCSVLSPLL) traverse the membrane as a helical segment. Residues 180–452 (IRTGLREIKK…VFRITLPQRN (273 aa)) are Cytoplasmic-facing. The HAMP domain occupies 181 to 234 (RTGLREIKKLSGVTEALNYNDSREPVEVSALPRELKPLGQALNKMHHALVKDFE). The Histidine kinase domain occupies 242 to 452 (DLAHELRTPI…VFRITLPQRN (211 aa)). Residue H245 is modified to Phosphohistidine; by autocatalysis.

In terms of processing, autophosphorylated.

It is found in the cell inner membrane. It carries out the reaction ATP + protein L-histidine = ADP + protein N-phospho-L-histidine.. Functionally, member of a two-component regulatory system HprR/HprS involved in response to hydrogen peroxide. Senses H(2)O(2), maybe via the redox state of the membrane. Activates HprR by phosphorylation. Can also phosphorylate CusR. The chain is Sensor histidine kinase HprS from Escherichia coli (strain K12).